Here is an 892-residue protein sequence, read N- to C-terminus: Alanine--tRNA ligase (892 aa).

4 residues coordinate Zn(2+): His565, His569, Cys675, and His679. A disordered region spans residues 852–871 (MGGKGGGGRPDMAQAGGPEA).

It belongs to the class-II aminoacyl-tRNA synthetase family. It depends on Zn(2+) as a cofactor.

The protein localises to the cytoplasm. It carries out the reaction tRNA(Ala) + L-alanine + ATP = L-alanyl-tRNA(Ala) + AMP + diphosphate. Catalyzes the attachment of alanine to tRNA(Ala) in a two-step reaction: alanine is first activated by ATP to form Ala-AMP and then transferred to the acceptor end of tRNA(Ala). Also edits incorrectly charged Ser-tRNA(Ala) and Gly-tRNA(Ala) via its editing domain. This Parvibaculum lavamentivorans (strain DS-1 / DSM 13023 / NCIMB 13966) protein is Alanine--tRNA ligase.